We begin with the raw amino-acid sequence, 156 residues long: Endogenous retrovirus group K member 21 Pro protein (156 aa).

A Peptidase A2 domain is found at Phe21–Leu96. Asp26 is an active-site residue. The G-patch domain maps to Tyr111–Phe156.

The protein belongs to the peptidase A2 family. HERV class-II K(HML-2) subfamily. Active as a homodimer. Post-translationally, autoproteolytically processed at the N-terminus. Expected C-terminal autoprocessing not detected. The sequence shown is that of the processed Pro protein.

The catalysed reaction is Processing at the authentic HIV-1 PR recognition site and release of the mature p17 matrix and the p24 capsid protein, as a result of the cleavage of the -SQNY-|-PIVQ- cleavage site.. Retroviral proteases have roles in the processing of the primary translation products and the maturation of the viral particle. Endogenous Pro proteins may have kept, lost or modified their original function during evolution. The polypeptide is Endogenous retrovirus group K member 21 Pro protein (ERVK-21) (Homo sapiens (Human)).